The primary structure comprises 314 residues: tRNA dimethylallyltransferase (314 aa).

Residue 10–17 coordinates ATP; the sequence is GPTAVGKT. 12–17 is a substrate binding site; that stretch reads TAVGKT. The interval 35 to 38 is interaction with substrate tRNA; that stretch reads DSMQ.

This sequence belongs to the IPP transferase family. Monomer. It depends on Mg(2+) as a cofactor.

It carries out the reaction adenosine(37) in tRNA + dimethylallyl diphosphate = N(6)-dimethylallyladenosine(37) in tRNA + diphosphate. Its function is as follows. Catalyzes the transfer of a dimethylallyl group onto the adenine at position 37 in tRNAs that read codons beginning with uridine, leading to the formation of N6-(dimethylallyl)adenosine (i(6)A). The chain is tRNA dimethylallyltransferase from Clostridium novyi (strain NT).